Consider the following 289-residue polypeptide: Ribosomal RNA small subunit methyltransferase A (289 aa).

The S-adenosyl-L-methionine site is built by N28, L30, G55, E77, D103, and N122.

This sequence belongs to the class I-like SAM-binding methyltransferase superfamily. rRNA adenine N(6)-methyltransferase family. RsmA subfamily.

It is found in the cytoplasm. It catalyses the reaction adenosine(1518)/adenosine(1519) in 16S rRNA + 4 S-adenosyl-L-methionine = N(6)-dimethyladenosine(1518)/N(6)-dimethyladenosine(1519) in 16S rRNA + 4 S-adenosyl-L-homocysteine + 4 H(+). Specifically dimethylates two adjacent adenosines (A1518 and A1519) in the loop of a conserved hairpin near the 3'-end of 16S rRNA in the 30S particle. May play a critical role in biogenesis of 30S subunits. This Jannaschia sp. (strain CCS1) protein is Ribosomal RNA small subunit methyltransferase A.